The primary structure comprises 654 residues: Smc-like protein Sph3 (654 aa).

Coiled-coil stretches lie at residues 135 to 290 and 341 to 503; these read TDAI…LQTV and IRGT…LTAA.

This sequence belongs to the Sph1/Sph2 family.

Functionally, involved in cell-shape determination. Required for the formation of rods and wild-type-like motility. The chain is Smc-like protein Sph3 from Haloferax volcanii (strain ATCC 29605 / DSM 3757 / JCM 8879 / NBRC 14742 / NCIMB 2012 / VKM B-1768 / DS2) (Halobacterium volcanii).